The following is a 1150-amino-acid chain: Fl(2)d-associated complex component (1150 aa).

Residues 1-10 are compositionally biased toward basic and acidic residues; it reads MEKKAKESLR. 4 disordered regions span residues 1–444, 477–710, 833–914, and 1034–1053; these read MEKK…EEER, QGRE…PPPL, ASED…MDTN, and KEQGQQRELDGDEEPPAKIP. A compositionally biased stretch (basic residues) spans 11 to 20; the sequence is RYKKAARHSA. Residues 21 to 44 are compositionally biased toward low complexity; the sequence is THSSSSDSTSDSDSGSSSYSSTDS. The segment covering 47–69 has biased composition (gly residues); the sequence is GVGGVGVGVGVPGGAGGPGGSGS. Residues 72-97 show a composition bias toward basic residues; the sequence is GHPHTHGHGHHPRSAERHHRKKKSSR. Residues 98-107 are compositionally biased toward low complexity; that stretch reads RGGSSSGDEP. Basic residues-rich tracts occupy residues 110-144 and 162-175; these read SRRKRDKRDHVQKKLVAKRNHIKRKLKEARLKKRA and AKLKKLAERKRLRA. Residues 122-147 adopt a coiled-coil conformation; that stretch reads KKLVAKRNHIKRKLKEARLKKRAAAA. Residues 176 to 199 are compositionally biased toward basic and acidic residues; that stretch reads ASKEQRERDKLRVVQRDRERDHHR. The span at 202 to 215 shows a compositional bias: low complexity; the sequence is SSRSPPSSSTTTTT. The stretch at 269–347 forms a coiled coil; the sequence is PSLERERERE…KLRRQEEEEG (79 aa). Composition is skewed to basic and acidic residues over residues 270–414, 428–444, and 492–529; these read SLER…DEMR, YAPRLRDPRELYSEEER, and PDERERLIRDRERDRERERDRERERNIGPRGDFRPEWE. The segment covering 537 to 558 has biased composition (gly residues); the sequence is AGGGPGGPSGTPGRPGGFVGGP. Composition is skewed to basic and acidic residues over residues 589–611 and 630–640; these read ERERERERERDRERERDREDRPD and WLEHDQREKPR. Residues 660–669 show a composition bias toward pro residues; that stretch reads PPAPSHPHPA. A compositionally biased stretch (basic and acidic residues) spans 693 to 702; sequence GHGDHGERPG. The span at 851–861 shows a compositional bias: low complexity; it reads QSLNLNQSLSS. A compositionally biased stretch (acidic residues) spans 879–889; the sequence is ELSEISDSDDD. Positions 890–903 are enriched in basic and acidic residues; it reads ILNKTDKVRPKNEL. A compositionally biased stretch (acidic residues) spans 905-914; sequence TETEQEMDTN.

This sequence belongs to the ZC3H13 family. As to quaternary structure, component of the WMM complex, a N6-methyltransferase complex composed of a catalytic subcomplex, named MAC, and of an associated subcomplex, named MACOM. The MAC subcomplex is composed of Ime4/Mettl3 and Mettl14. The MACOM subcomplex is composed of fl(2)d, Flacc/Xio, Hakai, vir, and, in some cases of nito. As to expression, widely expressed during embryogenesis but shows enrichment in the neuroectoderm.

The protein resides in the nucleus. Its function is as follows. Associated component of the WMM complex, a complex that mediates N6-methyladenosine (m6A) methylation of mRNAs, a modification that plays a role in the efficiency of mRNA splicing and is required for sex determination. In the WMM complex, acts as a key regulator of m6A methylation by bridging fl(2)d to the RNA-binding component nito. Required for sex determination and dosage compensation via Sxl alternative splicing: m6A methylation acts as a key regulator of Sxl pre-mRNA and promotes female-specific alternative splicing of Sxl, which determines female physiognomy. This Drosophila melanogaster (Fruit fly) protein is Fl(2)d-associated complex component.